The sequence spans 698 residues: SPX domain-containing membrane protein OsI_21475 (698 aa).

In terms of domain architecture, SPX spans 2 to 145 (VNFGKKLMAD…GYRFTDYYVT (144 aa)). Helical transmembrane passes span 248 to 268 (FMSL…TYII), 279 to 299 (LGAA…AQIF), 316 to 336 (LIFS…AYDM), 339 to 357 (LTVL…ARAV), 376 to 396 (AGFV…AGLL), and 412 to 432 (LPGW…WISF). The disordered stretch occupies residues 467 to 495 (LLRDSSKKDEDDDEEVDDSEEGTHDSRKP). Residues 476–486 (EDDDEEVDDSE) show a composition bias toward acidic residues. 5 consecutive transmembrane segments (helical) span residues 514 to 534 (LLIY…SSVI), 545 to 565 (AVAI…AVVG), 577 to 597 (LLMV…KITS), 605 to 625 (VVSA…NLSL), and 671 to 691 (LLNV…ASTF).

The protein belongs to the major facilitator superfamily.

Its subcellular location is the membrane. The polypeptide is SPX domain-containing membrane protein OsI_21475 (Oryza sativa subsp. indica (Rice)).